Consider the following 430-residue polypeptide: Glutamate-1-semialdehyde 2,1-aminomutase 2 (430 aa).

K268 carries the post-translational modification N6-(pyridoxal phosphate)lysine.

This sequence belongs to the class-III pyridoxal-phosphate-dependent aminotransferase family. HemL subfamily. Homodimer. Requires pyridoxal 5'-phosphate as cofactor.

The protein resides in the cytoplasm. It carries out the reaction (S)-4-amino-5-oxopentanoate = 5-aminolevulinate. Its pathway is porphyrin-containing compound metabolism; protoporphyrin-IX biosynthesis; 5-aminolevulinate from L-glutamyl-tRNA(Glu): step 2/2. The chain is Glutamate-1-semialdehyde 2,1-aminomutase 2 from Shouchella clausii (strain KSM-K16) (Alkalihalobacillus clausii).